A 207-amino-acid chain; its full sequence is LexA repressor (207 aa).

The segment at residues 29–49 (VREICSAVDLSSTSTVHGHLA) is a DNA-binding region (H-T-H motif). Active-site for autocatalytic cleavage activity residues include Ser-128 and Lys-166.

Belongs to the peptidase S24 family. As to quaternary structure, homodimer.

The enzyme catalyses Hydrolysis of Ala-|-Gly bond in repressor LexA.. Represses a number of genes involved in the response to DNA damage (SOS response), including recA and lexA. In the presence of single-stranded DNA, RecA interacts with LexA causing an autocatalytic cleavage which disrupts the DNA-binding part of LexA, leading to derepression of the SOS regulon and eventually DNA repair. This Lactobacillus johnsonii (strain CNCM I-12250 / La1 / NCC 533) protein is LexA repressor.